Here is a 178-residue protein sequence, read N- to C-terminus: Neuroblastoma suppressor of tumorigenicity 1 (178 aa).

The signal sequence occupies residues 1 to 16 (MLWVLVGTVLPVMLLA). 5 cysteine pairs are disulfide-bonded: Cys34/Cys84, Cys48/Cys98, Cys58/Cys117, Cys62/Cys119, and Cys81/Cys122. The CTCK domain maps to 34–123 (CEAKNITQIV…IVHCSCQACG (90 aa)). The interval 130-178 (GLNVYMQGEDGPGSQPGSHSHSHPHPGCQTPEPEEPPGAPQVEEEGAED) is disordered.

It belongs to the DAN family. As to quaternary structure, homodimer. Most abundant in lung, brain, intestine and kidney.

It localises to the secreted. Its function is as follows. Possible candidate as a tumor suppressor gene of neuroblastoma. May play an important role in preventing cells from entering the final stage (G1/S) of the transformation process. This chain is Neuroblastoma suppressor of tumorigenicity 1 (Nbl1), found in Rattus norvegicus (Rat).